The chain runs to 228 residues: Ribosomal RNA small subunit methyltransferase G (228 aa).

Residues glycine 70, 121–122 (AE), and arginine 138 contribute to the S-adenosyl-L-methionine site.

The protein belongs to the methyltransferase superfamily. RNA methyltransferase RsmG family.

The protein localises to the cytoplasm. In terms of biological role, specifically methylates the N7 position of a guanine in 16S rRNA. In Thermotoga sp. (strain RQ2), this protein is Ribosomal RNA small subunit methyltransferase G.